Consider the following 277-residue polypeptide: Prohibitin-3, mitochondrial (277 aa).

At Gly-2 the chain carries N-acetylglycine. The Mitochondrial matrix segment spans residues 2-6 (GSQQA). A helical; Signal-anchor for type II membrane protein transmembrane segment spans residues 7–28 (AVSFLSNLAKAAFGLGTAATVL). The Mitochondrial intermembrane segment spans residues 29–277 (NTSLFTVDGG…GQSMLFALNR (249 aa)).

Belongs to the prohibitin family. As to quaternary structure, component of a prohibitin multimeric complex in mitochondrial membranes. In terms of tissue distribution, mostly expressed in proliferative tissues, including vasculature, shoot and root apical tissues. Expressed in roots, stems, leaves and flowers (at protein level).

It localises to the cell membrane. The protein resides in the mitochondrion inner membrane. It is found in the nucleus. The protein localises to the cytoplasm. In terms of biological role, prohibitin probably acts as a holdase/unfoldase for the stabilization of newly synthesized mitochondrial proteins. Necessary for mitochondrial and cell metabolism and biogenesis. Required to regulate the ethylene-mediated signaling; involved in growth maintenance in the presence of ethylene. Functions in nitric oxide (NO)-mediated responses and in hydrogen peroxide-induced NO accumulation. This chain is Prohibitin-3, mitochondrial (PHB3), found in Arabidopsis thaliana (Mouse-ear cress).